The primary structure comprises 125 residues: Photosystem I reaction center subunit IV, chloroplastic (125 aa).

A chloroplast-targeting transit peptide spans 1–34; the sequence is MASIASSVAVRLGLTQVLPNKNFSSPRSTRLVVR. A compositionally biased stretch (low complexity) spans 42–57; it reads APAAASPEGEAPKAAA. The interval 42-68 is disordered; it reads APAAASPEGEAPKAAAKPPPIGPKRGS.

This sequence belongs to the PsaE family.

Its subcellular location is the plastid. The protein localises to the chloroplast thylakoid membrane. Its function is as follows. Stabilizes the interaction between PsaC and the PSI core, assists the docking of the ferredoxin to PSI and interacts with ferredoxin-NADP oxidoreductase. In Spinacia oleracea (Spinach), this protein is Photosystem I reaction center subunit IV, chloroplastic (PSAE-1).